The primary structure comprises 91 residues: Sec-independent protein translocase protein TatA (91 aa).

Residues 3–23 (FFGIGLPEMLVILAIALLVFG) form a helical membrane-spanning segment. The tract at residues 57 to 91 (DRTPATPAEATVEPPVLDSAPTEAVTVEKQTETQV) is disordered. The span at 59–72 (TPATPAEATVEPPV) shows a compositional bias: low complexity.

This sequence belongs to the TatA/E family. In terms of assembly, forms a complex with TatC.

The protein resides in the cell inner membrane. Functionally, part of the twin-arginine translocation (Tat) system that transports large folded proteins containing a characteristic twin-arginine motif in their signal peptide across membranes. TatA could form the protein-conducting channel of the Tat system. The sequence is that of Sec-independent protein translocase protein TatA from Synechococcus elongatus (strain ATCC 33912 / PCC 7942 / FACHB-805) (Anacystis nidulans R2).